Here is a 430-residue protein sequence, read N- to C-terminus: sn-glycerol-3-phosphate-binding periplasmic protein UgpB (430 aa).

A signal peptide spans 1-20; the sequence is MRLISISTTIAFGFAFQAQA. Residues tyrosine 62, aspartate 86, serine 141, serine 268, glycine 302, tyrosine 341, and arginine 392 each coordinate sn-glycerol 3-phosphate.

This sequence belongs to the bacterial solute-binding protein 1 family. The complex is composed of two ATP-binding proteins (UgpC), two transmembrane proteins (UgpA and UgpE) and a solute-binding protein (UgpB).

It localises to the periplasm. Part of the ABC transporter complex UgpBAEC involved in sn-glycerol-3-phosphate (G3P) import. Binds G3P. This Rhizobium meliloti (strain 1021) (Ensifer meliloti) protein is sn-glycerol-3-phosphate-binding periplasmic protein UgpB (ugpB).